The primary structure comprises 208 residues: DNA-binding protein HupB (208 aa).

A bacterial histone-like domain region spans residues 1-90 (MNKAELIDVL…PGAQFKAVIS (90 aa)). Position 3 is an N6-acetyllysine (Lys3). Lys3 is subject to N6-acetyllysine; alternate; partial. At Lys3 the chain carries N6-methyllysine; alternate; partial. Lys72 is subject to N6-acetyllysine; partial. An N6-methyllysine; partial modification is found at Lys86. The C-terminus, required for nucleoid localization stretch occupies residues 92–208 (AQKLPADGPA…KKAPAKKGRR (117 aa)). An N6-acetyllysine; alternate; partial mark is found at Lys94 and Lys103. An N6-methyllysine; alternate; partial mark is found at Lys94 and Lys103. Positions 96–208 (PADGPAVKRG…KKAPAKKGRR (113 aa)) are disordered. Residues 101 to 205 (AVKRGVTAGP…AAAKKAPAKK (105 aa)) form a degenerate repeats region region. Residues 113–208 (KAAKKAPAKK…KKAPAKKGRR (96 aa)) show a composition bias toward basic residues. N6-acetyllysine is present on residues Lys116, Lys136, Lys149, and Lys168.

It belongs to the bacterial histone-like protein family. Long actinobacterial subfamily. As to quaternary structure, may form oligomers. Interacts with RNase E (rne). In terms of processing, in addition to the identifed modifications, is also methylated on one of Arg-53; Arg-54 or Arg-55.

It is found in the cytoplasm. The protein resides in the nucleoid. Its subcellular location is the secreted. The protein localises to the cell wall. The catalysed reaction is 4 Fe(2+) + O2 + 4 H(+) = 4 Fe(3+) + 2 H2O. With respect to regulation, trans-stilbene derivative 4,4'-[(E)-ethene-1,2 diylbis({5[(phenylcarbonyl)amino]benzene-2,1-diyl}sulfonylimino)] dibenzoic acid (SD1) inhibits DNA binding at 50 uM. SD1 does not inhibit growth in a range of 3-1600 uM. Functionally, a nucleoid-associated protein (NAP) that plays a crucial role in local chromosome architecture. Helps organize newly replicated oriC proximal regions and contributes to the timing of replication initiation and coordinating replication with chromosome segregation. There are between 30,000-60,000 molecules in a log phase cell; the protein-DNA complex is dynamic during the cell cycle, with more complexes near the cell ends. Binds irregularly along the chromosome with higher binding near the origin of replication (oriC) and lowest binding near the chromosome terminus (ter). Binds DNA non-sequence specifically via both its N- and C-terminal domains with high affinity, has no preference for linear or supercoiled DNA. Binds four-way junction DNA. Represses T7 RNA polymerase in vitro. The C-terminal domain enhances DNA end-joining in vitro in the presence of T4 DNA ligase. RNase E and HupB jointly contribute to cellular adaptation to changing growth conditions and survival during antibiotic treatment. Has ferroxidase activity, converts Fe(2+) into Fe(3+). Binds Fe(3+) but not Fe(2+); prevents the generation of hydroxyl radicals by the Fenton reaction and thus protects DNA from damage. May function in iron storage. Its function is as follows. Plays a role in epigenetic resistance to antibiotics. Growth on levels of isoniazid (INH) near the minimal inhibitory concentration (MIC) kills most bacteria. The surviving cells grow as either large or small colony variants (SCV), evidence suggest SCVs are associated with persistent infections. Mutating this protein leads to specific loss of SCVs. In terms of biological role, may play a role in cell wall assembly. The chain is DNA-binding protein HupB from Mycolicibacterium smegmatis (strain ATCC 700084 / mc(2)155) (Mycobacterium smegmatis).